A 378-amino-acid polypeptide reads, in one-letter code: MSTPRTIVGVSGGVDSSVAAWKLAQDGEPIAGLFMQNWADDGSGDCRAEDDRRDAVAVCGVLGIPFHFRDFSGEYWSGVFEHFLAEYAAGRTPNPDVLCNREVKFKHFLEAAQALGAERIATGHYARVAHLGGRWRLLRGADRNKDQSYFLHQLGQSQLAATLFPIGELEKSALRRIAQDAGLPTHAKKDSTGICFIGERDFREFLGRYLPARTGEIRDPQGQRIAEHPGVFYFTLGQREGLNIGGVRGRAAAPWYVVGKDVGSNVLYVDQDRDSPLLQSRWLQSEQAHWVTGAPPARSFSCTAQTRYRQPDEPCTVTVQDDGTLQVNFERPQRAVTPGQSLVLYDGEECLGGAVIAATDAPLERQLAGSSFSSEVVA.

ATP is bound by residues glycine 9–serine 16 and methionine 35. An interaction with target base in tRNA region spans residues asparagine 94–aspartate 96. The Nucleophile role is filled by cysteine 99. A disulfide bond links cysteine 99 and cysteine 195. Glycine 123 contributes to the ATP binding site. The segment at lysine 145–glutamine 147 is interaction with tRNA. Cysteine 195 serves as the catalytic Cysteine persulfide intermediate. Positions arginine 307 to tyrosine 308 are interaction with tRNA.

The protein belongs to the MnmA/TRMU family.

It is found in the cytoplasm. It carries out the reaction S-sulfanyl-L-cysteinyl-[protein] + uridine(34) in tRNA + AH2 + ATP = 2-thiouridine(34) in tRNA + L-cysteinyl-[protein] + A + AMP + diphosphate + H(+). Functionally, catalyzes the 2-thiolation of uridine at the wobble position (U34) of tRNA, leading to the formation of s(2)U34. This chain is tRNA-specific 2-thiouridylase MnmA, found in Xanthomonas campestris pv. campestris (strain 8004).